A 167-amino-acid chain; its full sequence is Leptin (167 aa).

Positions 1–21 (MHWGTLCGFLWLWPYLFYVQA) are cleaved as a signal peptide. C117 and C167 are oxidised to a cystine.

Belongs to the leptin family. In terms of assembly, interacts with SIGLEC6. In terms of tissue distribution, adipose tissue is the main source of leptin. It is also produced by other peripheral tissues such as the skeletal muscle. Expressed by intercalated and striated tracts of submandibular and parotid salivary gland intralobular ducts. Detected by fundic epithelium of the gastric mucosa. Secreted into blood and gastric juice.

The protein localises to the secreted. Its function is as follows. Key player in the regulation of energy balance and body weight control. Once released into the circulation, has central and peripheral effects by binding LEPR, found in many tissues, which results in the activation of several major signaling pathways. In the hypothalamus, acts as an appetite-regulating factor that induces a decrease in food intake and an increase in energy consumption by inducing anorexinogenic factors and suppressing orexigenic neuropeptides, also regulates bone mass and secretion of hypothalamo-pituitary-adrenal hormones. In the periphery, increases basal metabolism, influences reproductive function, regulates pancreatic beta-cell function and insulin secretion, is pro-angiogenic for endothelial cell and affects innate and adaptive immunity. In the arcuate nucleus of the hypothalamus, activates by depolarization POMC neurons inducing FOS and SOCS3 expression to release anorexigenic peptides and inhibits by hyperpolarization NPY neurons inducing SOCS3 with a consequent reduction on release of orexigenic peptides. In addition to its known satiety inducing effect, has a modulatory role in nutrient absorption. In the intestine, reduces glucose absorption by enterocytes by activating PKC and leading to a sequential activation of p38, PI3K and ERK signaling pathways which exerts an inhibitory effect on glucose absorption. Acts as a growth factor on certain tissues, through the activation of different signaling pathways increases expression of genes involved in cell cycle regulation such as CCND1, via JAK2-STAT3 pathway, or VEGFA, via MAPK1/3 and PI3K-AKT1 pathways. May also play an apoptotic role via JAK2-STAT3 pathway and up-regulation of BIRC5 expression. Pro-angiogenic, has mitogenic activity on vascular endothelial cells and plays a role in matrix remodeling by regulating the expression of matrix metalloproteinases (MMPs) and tissue inhibitors of metalloproteinases (TIMPs). In innate immunity, modulates the activity and function of neutrophils by increasing chemotaxis and the secretion of oxygen radicals. Increases phagocytosis by macrophages and enhances secretion of pro-inflammatory mediators. Increases cytotoxic ability of NK cells. Plays a pro-inflammatory role, in synergy with IL1B, by inducing NOS2 which promotes the production of IL6, IL8 and Prostaglandin E2, through a signaling pathway that involves JAK2, PI3K, MAP2K1/MEK1 and MAPK14/p38. In adaptive immunity, promotes the switch of memory T-cells towards T helper-1 cell immune responses. Increases CD4(+)CD25(-) T-cell proliferation and reduces autophagy during TCR (T-cell receptor) stimulation, through MTOR signaling pathway activation and BCL2 up-regulation. This is Leptin from Homo sapiens (Human).